The chain runs to 184 residues: dCTP deaminase (184 aa).

A dCTP-binding site is contributed by 107-112; the sequence is KSTYAR. Catalysis depends on E133, which acts as the Proton donor/acceptor. Residues Q152, Y166, and Q176 each coordinate dCTP.

This sequence belongs to the dCTP deaminase family. As to quaternary structure, homotrimer.

The catalysed reaction is dCTP + H2O + H(+) = dUTP + NH4(+). It functions in the pathway pyrimidine metabolism; dUMP biosynthesis; dUMP from dCTP (dUTP route): step 1/2. Its function is as follows. Catalyzes the deamination of dCTP to dUTP. The sequence is that of dCTP deaminase from Granulibacter bethesdensis (strain ATCC BAA-1260 / CGDNIH1).